Reading from the N-terminus, the 403-residue chain is Argininosuccinate synthase (403 aa).

Ala-10–Ser-18 contacts ATP. Tyr-87 is an L-citrulline binding site. Residue Gly-117 participates in ATP binding. L-aspartate contacts are provided by Thr-119, Asn-123, and Asp-124. Asn-123 contributes to the L-citrulline binding site. Residues Arg-127, Ser-175, Ser-184, Glu-260, and Tyr-272 each coordinate L-citrulline.

Belongs to the argininosuccinate synthase family. Type 1 subfamily. As to quaternary structure, homotetramer.

Its subcellular location is the cytoplasm. It catalyses the reaction L-citrulline + L-aspartate + ATP = 2-(N(omega)-L-arginino)succinate + AMP + diphosphate + H(+). The protein operates within amino-acid biosynthesis; L-arginine biosynthesis; L-arginine from L-ornithine and carbamoyl phosphate: step 2/3. This chain is Argininosuccinate synthase, found in Bacillus licheniformis (strain ATCC 14580 / DSM 13 / JCM 2505 / CCUG 7422 / NBRC 12200 / NCIMB 9375 / NCTC 10341 / NRRL NRS-1264 / Gibson 46).